Reading from the N-terminus, the 249-residue chain is ATP synthase subunit a (249 aa).

6 helical membrane-spanning segments follow: residues 26–46, 84–104, 114–134, 143–163, 185–205, and 208–228; these read FTNSSLFMVATVAAAGAFLYL, FFPFVFSLFMFVLVANLLGLF, IVVTFALALLVIGTVLVYGFW, LFVPEGVPGVLLPLVVLIEVI, ITLKVFAGFVTSLGALGVAGA, and AVLPLAMTVALTGLELLVAFL.

This sequence belongs to the ATPase A chain family. As to quaternary structure, F-type ATPases have 2 components, CF(1) - the catalytic core - and CF(0) - the membrane proton channel. CF(1) has five subunits: alpha(3), beta(3), gamma(1), delta(1), epsilon(1). CF(0) has three main subunits: a(1), b(2) and c(9-12). The alpha and beta chains form an alternating ring which encloses part of the gamma chain. CF(1) is attached to CF(0) by a central stalk formed by the gamma and epsilon chains, while a peripheral stalk is formed by the delta and b chains.

The protein resides in the cell inner membrane. Functionally, key component of the proton channel; it plays a direct role in the translocation of protons across the membrane. This Chelativorans sp. (strain BNC1) protein is ATP synthase subunit a.